A 389-amino-acid chain; its full sequence is Leucine aminopeptidase 1 (389 aa).

Positions 1–19 (MKLPALLTLGVAASTMVLA) are cleaved as a signal peptide. A propeptide spanning residues 20–88 (AIAPDQVPLN…LPKVFPTPAV (69 aa)) is cleaved from the precursor. N-linked (GlcNAc...) asparagine glycans are attached at residues N96, N119, N149, N164, and N181. Zn(2+) contacts are provided by H189 and D208. The N-linked (GlcNAc...) asparagine glycan is linked to N233. The Zn(2+) site is built by E247 and D274. C323 and C327 are oxidised to a cystine. H356 is a binding site for Zn(2+).

It belongs to the peptidase M28 family. M28E subfamily. As to quaternary structure, monomer. It depends on Zn(2+) as a cofactor.

It localises to the secreted. Its function is as follows. Extracellular aminopeptidase that allows assimilation of proteinaceous substrates. The sequence is that of Leucine aminopeptidase 1 (LAP1) from Paracoccidioides brasiliensis (strain Pb18).